The sequence spans 827 residues: MVRNKYTLTTAGKSPSKKSRTGSLSKQHDATGDDDGETGTLDGSGSAAGSPVGGGTDAAAKRCDGGSVHKQNLYIISFPVIFVFNVLRSLLYQLFIVFRYVYNFTTKVVYRPVRKECGLEIVINTDQHGHHHHHHHRHSSHSIHSTAAAHQLQQHQQQQQHQYSLLQQEQHGVTEPQQQQQQQHQAAHPLQCSQSGILVNGEGREMSIQRSASGSQVGPGDPLLAKQKHHHRRAFEYISKALKIDEDNEDQKELAIELYRKGILELERGIAVECWGGRGEVWERAQRLHDKMQTNLSMARDRLQFLGMLCVCVSVQRKHLHPTRTTLPYRDVKSKLHTTPTENRMVSFNENCTITTNHHPARGTAASSRPTTAATAPATPSLPIKQTASEASGRKLTVGYKRPGNLGVMNKSQTLPRSMGGTRTTPTGTGGAGGIAGGLGNGGTYGGSIVGGGAGMPKIVPKPAATPPAIRRQFSVSIPIPGSSPVRKASNGYGSKNTPPPRSKTPLAGQQPQQPQQQQQQQPQISVKGVEPKLVQIIMDEIVEGGAKVQWQDIAGQEVAKQALQEMVILPSVRPELFTGLRTPAKGLLLFGPPGNGKTLLARAVATECSATFFSISAATLTSKYVGDGEKLVRALFAVARELQPSIIFIDEVDSVLSERSSNEHEATRRLKTEFLVQFDGLPANSEADRIVVMAATNRPQELDEAALRRFPKRVYVTLPDRDTRELLLRRLLQKQGSPLSDADLAHLAQLTEGYSGSDLTALARDAALEPIRELNVEEVKNMDPTKLRSIRESDFHNSLKRIRRSVAPQSLAAYEKWLQDFGDVTL.

Over residues 1–13 the composition is skewed to polar residues; the sequence is MVRNKYTLTTAGK. Positions 1-58 are disordered; that stretch reads MVRNKYTLTTAGKSPSKKSRTGSLSKQHDATGDDDGETGTLDGSGSAAGSPVGGGTDA. At 1-79 the chain is on the cytoplasmic side; sequence MVRNKYTLTT…KQNLYIISFP (79 aa). Positions 38 to 50 are enriched in low complexity; sequence TGTLDGSGSAAGS. The helical intramembrane region spans 80–100; it reads VIFVFNVLRSLLYQLFIVFRY. At 101 to 827 the chain is on the cytoplasmic side; that stretch reads VYNFTTKVVY…WLQDFGDVTL (727 aa). Disordered regions lie at residues 127–190 and 207–229; these read QHGH…AHPL and SIQR…KQKH. Residues 129 to 141 are compositionally biased toward basic residues; it reads GHHHHHHHRHSSH. A compositionally biased stretch (low complexity) spans 142–190; it reads SIHSTAAAHQLQQHQQQQQHQYSLLQQEQHGVTEPQQQQQQQHQAAHPL. The MIT domain occupies 231–306; sequence HRRAFEYISK…SMARDRLQFL (76 aa). Disordered regions lie at residues 358 to 381, 398 to 433, and 476 to 526; these read HHPA…ATPS, VGYK…GGAG, and VSIP…PQIS. The span at 364–381 shows a compositional bias: low complexity; sequence TAASSRPTTAATAPATPS. Low complexity-rich tracts occupy residues 476-486 and 510-524; these read VSIPIPGSSPV and QQPQ…QQPQ. 592–599 is an ATP binding site; it reads GPPGNGKT.

It belongs to the AAA ATPase family. Spastin subfamily. In terms of assembly, homohexamer. The homohexamer is stabilized by ATP-binding. The homohexamer may adopt a ring conformation through which microtubules pass prior to being severed. Interacts with microtubules.

The protein localises to the membrane. It is found in the cytoplasm. Its subcellular location is the cytoskeleton. It localises to the microtubule organizing center. The protein resides in the centrosome. The catalysed reaction is n ATP + n H2O + a microtubule = n ADP + n phosphate + (n+1) alpha/beta tubulin heterodimers.. In terms of biological role, ATP-dependent microtubule severing protein. Microtubule severing may promote reorganization of cellular microtubule arrays and the release of microtubules from the microtubule organizing center following nucleation. The protein is Spastin (spas) of Anopheles gambiae (African malaria mosquito).